We begin with the raw amino-acid sequence, 550 residues long: Dihydroxy-acid dehydratase (550 aa).

Residue Asp-81 coordinates Mg(2+). Residue Cys-122 participates in [2Fe-2S] cluster binding. Asp-123 and Lys-124 together coordinate Mg(2+). Lys-124 is modified (N6-carboxylysine). Cys-194 provides a ligand contact to [2Fe-2S] cluster. Glu-442 is a binding site for Mg(2+). The Proton acceptor role is filled by Ser-467.

It belongs to the IlvD/Edd family. Homodimer. [2Fe-2S] cluster serves as cofactor. It depends on Mg(2+) as a cofactor.

It catalyses the reaction (2R)-2,3-dihydroxy-3-methylbutanoate = 3-methyl-2-oxobutanoate + H2O. The catalysed reaction is (2R,3R)-2,3-dihydroxy-3-methylpentanoate = (S)-3-methyl-2-oxopentanoate + H2O. Its pathway is amino-acid biosynthesis; L-isoleucine biosynthesis; L-isoleucine from 2-oxobutanoate: step 3/4. It participates in amino-acid biosynthesis; L-valine biosynthesis; L-valine from pyruvate: step 3/4. Functionally, functions in the biosynthesis of branched-chain amino acids. Catalyzes the dehydration of (2R,3R)-2,3-dihydroxy-3-methylpentanoate (2,3-dihydroxy-3-methylvalerate) into 2-oxo-3-methylpentanoate (2-oxo-3-methylvalerate) and of (2R)-2,3-dihydroxy-3-methylbutanoate (2,3-dihydroxyisovalerate) into 2-oxo-3-methylbutanoate (2-oxoisovalerate), the penultimate precursor to L-isoleucine and L-valine, respectively. The protein is Dihydroxy-acid dehydratase of Methanoregula boonei (strain DSM 21154 / JCM 14090 / 6A8).